Consider the following 339-residue polypeptide: Dihydroorotase (339 aa).

Residues H12 and H14 each contribute to the Zn(2+) site. Residues 14 to 16 (HVR) and N40 contribute to the substrate site. Zn(2+) is bound by residues K94, H133, H167, and D239. The residue at position 94 (K94) is an N6-carboxylysine. Position 133 (H133) interacts with substrate. The active site involves D239. Positions 243 and 255 each coordinate substrate.

It belongs to the metallo-dependent hydrolases superfamily. DHOase family. Class II DHOase subfamily. Homodimer. Zn(2+) serves as cofactor.

The enzyme catalyses (S)-dihydroorotate + H2O = N-carbamoyl-L-aspartate + H(+). The protein operates within pyrimidine metabolism; UMP biosynthesis via de novo pathway; (S)-dihydroorotate from bicarbonate: step 3/3. In terms of biological role, catalyzes the reversible cyclization of carbamoyl aspartate to dihydroorotate. This Helicobacter pylori (strain J99 / ATCC 700824) (Campylobacter pylori J99) protein is Dihydroorotase.